The following is a 397-amino-acid chain: Succinyl-diaminopimelate desuccinylase (397 aa).

Position 73 (His73) interacts with Zn(2+). Asp75 is an active-site residue. Asp106 contacts Zn(2+). Catalysis depends on Glu140, which acts as the Proton acceptor. The Zn(2+) site is built by Glu141, Glu169, and His366.

It belongs to the peptidase M20A family. DapE subfamily. As to quaternary structure, homodimer. Zn(2+) serves as cofactor. Requires Co(2+) as cofactor.

It carries out the reaction N-succinyl-(2S,6S)-2,6-diaminopimelate + H2O = (2S,6S)-2,6-diaminopimelate + succinate. It functions in the pathway amino-acid biosynthesis; L-lysine biosynthesis via DAP pathway; LL-2,6-diaminopimelate from (S)-tetrahydrodipicolinate (succinylase route): step 3/3. In terms of biological role, catalyzes the hydrolysis of N-succinyl-L,L-diaminopimelic acid (SDAP), forming succinate and LL-2,6-diaminopimelate (DAP), an intermediate involved in the bacterial biosynthesis of lysine and meso-diaminopimelic acid, an essential component of bacterial cell walls. The polypeptide is Succinyl-diaminopimelate desuccinylase (Rhizobium johnstonii (strain DSM 114642 / LMG 32736 / 3841) (Rhizobium leguminosarum bv. viciae)).